Reading from the N-terminus, the 302-residue chain is MKALPIQNPTHASTISWRDYLELTKPRVVALMILTSVIGMLLAAPGVPEWSVLLFGNLGIALLAGAAAVVNHVVDQKIDTVMARTRKRPVATGRIAPLDALLFATVLAALGMVVLVWQVNELTAWLTLASLVGYAGVYTLFLKRATPQNIVIGGLAGAMPPLLGWTAVTGQVEGHALLLVLIIFAWTPPHFWALAIHRKEEYAKAGIPMLPVTHGNRYTELHILLYTLMLLAVSLLPFVTGMSGGIYLVGALALGLRFLQYAVRLLRGDDRRVALNTFKYSITYLMALFVVLLVDHFVFVPA.

The next 9 helical transmembrane spans lie at 28–48, 50–70, 95–115, 122–142, 150–170, 176–196, 221–241, 243–263, and 282–302; these read VVAL…PGVP, WSVL…AAVV, IAPL…MVVL, LTAW…TLFL, IVIG…AVTG, ALLL…ALAI, LHIL…FVTG, SGGI…QYAV, and ITYL…FVPA.

This sequence belongs to the UbiA prenyltransferase family. Protoheme IX farnesyltransferase subfamily.

The protein localises to the cell inner membrane. It catalyses the reaction heme b + (2E,6E)-farnesyl diphosphate + H2O = Fe(II)-heme o + diphosphate. The protein operates within porphyrin-containing compound metabolism; heme O biosynthesis; heme O from protoheme: step 1/1. Converts heme B (protoheme IX) to heme O by substitution of the vinyl group on carbon 2 of heme B porphyrin ring with a hydroxyethyl farnesyl side group. This chain is Protoheme IX farnesyltransferase, found in Marinobacter nauticus (strain ATCC 700491 / DSM 11845 / VT8) (Marinobacter aquaeolei).